The sequence spans 548 residues: Methyl-accepting chemotaxis protein HlyB (548 aa).

At 1–10 the chain is on the cytoplasmic side; it reads MIINKFSLKW. Residues 11–31 form a helical membrane-spanning segment; it reads MLAIAVAIPAIALLFVAFTSL. Residues 32–199 are Periplasmic-facing; that stretch reads NTMSVMQAQS…SFEAGRTKQM (168 aa). A helical transmembrane segment spans residues 200–220; it reads VIIAAGLIISFITSLVIITNL. Residues 218 to 271 form the HAMP domain; the sequence is TNLRSRVAYLKDRMSSAAANLSLRTRLELDGNDELCDIGKSFNAFIDKVHHSIE. At 221–548 the chain is on the cytoplasmic side; that stretch reads RSRVAYLKDR…LDKLVGSFEL (328 aa). The region spanning 276 to 512 is the Methyl-accepting transducer domain; it reads NSKELATMAS…DINRNVEDIN (237 aa).

This sequence belongs to the methyl-accepting chemotaxis (MCP) protein family.

The protein localises to the cell inner membrane. Chemotactic-signal transducers respond to changes in the concentration of attractants and repellents in the environment, transduce a signal from the outside to the inside of the cell, and facilitate sensory adaptation through the variation of the level of methylation. This chain is Methyl-accepting chemotaxis protein HlyB (hlyB), found in Vibrio cholerae serotype O1 (strain ATCC 39315 / El Tor Inaba N16961).